Here is a 327-residue protein sequence, read N- to C-terminus: Eukaryotic translation initiation factor 3 subunit I (327 aa).

WD repeat units follow at residues 8-49, 51-89, 188-227, 229-268, and 285-324; these read GHER…GSYD, HNGA…CIYT, VHRY…KLKQ, KSER…GHFE, and GHFG…LGFT.

This sequence belongs to the eIF-3 subunit I family. In terms of assembly, component of the eukaryotic translation initiation factor 3 (eIF-3) complex.

The protein localises to the cytoplasm. Its function is as follows. Component of the eukaryotic translation initiation factor 3 (eIF-3) complex, which is involved in protein synthesis of a specialized repertoire of mRNAs and, together with other initiation factors, stimulates binding of mRNA and methionyl-tRNAi to the 40S ribosome. The eIF-3 complex specifically targets and initiates translation of a subset of mRNAs involved in cell proliferation. This is Eukaryotic translation initiation factor 3 subunit I from Caenorhabditis briggsae.